Consider the following 325-residue polypeptide: MNALTAVKPTPAPLAQPYPGFSIAPSAQSPRLLELTFSAETTTQFLQQVAQWPVQALEYKSFLRFQVGKILDDLCGNQLQPLLIKTLLDRAEGALLINGEGIDNVSQAEEMVKLATAVAHLIGRSNFDAMSGQYYARFVVKNVDNSDSYLRQPHRVMELHNDGTYVEEQTDYVLMMKIDEQNMQGGNSLLLHLDDWEHLDEFFRDPLARRPMRWAAPPSKNVSKDVFHPVFDVDSLGRPVMRYIDQFVQPKDFEEGTWLSRLSDALETSKNILSIPVPVGKFLLINNLFWLHGRDRFTPHPDLRRELMRQRGYFAYSTNHYQTHQ.

Fe cation-binding residues include His-160, Asp-162, and His-292.

It belongs to the glutarate hydroxylase family. Homotetramer. Requires Fe(2+) as cofactor.

It carries out the reaction glutarate + 2-oxoglutarate + O2 = (S)-2-hydroxyglutarate + succinate + CO2. The protein operates within amino-acid degradation. Acts as an alpha-ketoglutarate-dependent dioxygenase catalyzing hydroxylation of glutarate (GA) to L-2-hydroxyglutarate (L2HG). Functions in a L-lysine degradation pathway that proceeds via cadaverine, glutarate and L-2-hydroxyglutarate. The polypeptide is Glutarate 2-hydroxylase (Klebsiella pneumoniae (strain 342)).